We begin with the raw amino-acid sequence, 135 residues long: Thyrostimulin beta-5 subunit (135 aa).

The first 19 residues, 1–19, serve as a signal peptide directing secretion; sequence MVMPLVLSLALTPPPLCHA. 5 disulfide bridges follow: C30-C87, C54-C102, C63-C118, C67-C120, and C123-C130.

Belongs to the glycoprotein hormones subunit beta family. In terms of assembly, heterodimer with GPHA2; non-covalently-linked. Expressed by the venom duct.

It is found in the secreted. The protein is Thyrostimulin beta-5 subunit of Conus victoriae (Queen Victoria cone).